The sequence spans 238 residues: Beta-glucanase (238 aa).

The N-terminal stretch at 1-26 (MMKKKSWFTLMITGVISLFFSVSAFA) is a signal peptide. A GH16 domain is found at 29–238 (VFWEPLSYFN…EYDWVKYTSN (210 aa)). C56 and C85 form a disulfide bridge. The active-site Nucleophile is E129. E133 serves as the catalytic Proton donor.

The protein belongs to the glycosyl hydrolase 16 family.

It carries out the reaction Hydrolysis of (1-&gt;4)-beta-D-glucosidic linkages in beta-D-glucans containing (1-&gt;3)- and (1-&gt;4)-bonds.. The sequence is that of Beta-glucanase (gluB) from Paenibacillus polymyxa (Bacillus polymyxa).